Reading from the N-terminus, the 189-residue chain is HGPRTase-like protein (189 aa).

Belongs to the purine/pyrimidine phosphoribosyltransferase family. Archaeal HPRT subfamily.

May catalyze a purine salvage reaction, the substrate is unknown. The chain is HGPRTase-like protein from Halorhabdus utahensis (strain DSM 12940 / JCM 11049 / AX-2).